Consider the following 157-residue polypeptide: 2-C-methyl-D-erythritol 2,4-cyclodiphosphate synthase (157 aa).

The a divalent metal cation site is built by aspartate 8 and histidine 10. 4-CDP-2-C-methyl-D-erythritol 2-phosphate is bound by residues 8–10 (DVH) and 34–35 (HS). Histidine 42 contacts a divalent metal cation. Residues 56-58 (DIG), 61-65 (FPDTD), 100-106 (AQAPKMA), 132-135 (TTTE), phenylalanine 139, and arginine 142 each bind 4-CDP-2-C-methyl-D-erythritol 2-phosphate.

This sequence belongs to the IspF family. In terms of assembly, homotrimer. The cofactor is a divalent metal cation.

The enzyme catalyses 4-CDP-2-C-methyl-D-erythritol 2-phosphate = 2-C-methyl-D-erythritol 2,4-cyclic diphosphate + CMP. It participates in isoprenoid biosynthesis; isopentenyl diphosphate biosynthesis via DXP pathway; isopentenyl diphosphate from 1-deoxy-D-xylulose 5-phosphate: step 4/6. Involved in the biosynthesis of isopentenyl diphosphate (IPP) and dimethylallyl diphosphate (DMAPP), two major building blocks of isoprenoid compounds. Catalyzes the conversion of 4-diphosphocytidyl-2-C-methyl-D-erythritol 2-phosphate (CDP-ME2P) to 2-C-methyl-D-erythritol 2,4-cyclodiphosphate (ME-CPP) with a corresponding release of cytidine 5-monophosphate (CMP). In Pseudomonas savastanoi pv. phaseolicola (strain 1448A / Race 6) (Pseudomonas syringae pv. phaseolicola (strain 1448A / Race 6)), this protein is 2-C-methyl-D-erythritol 2,4-cyclodiphosphate synthase.